The sequence spans 502 residues: ATP synthase subunit alpha (502 aa).

Residues 114–139 (PIDGRGPIETSKTRPIESPAPGVMDR) form a disordered region. 169–176 (GDRQTGKT) provides a ligand contact to ATP.

It belongs to the ATPase alpha/beta chains family. As to quaternary structure, F-type ATPases have 2 components, CF(1) - the catalytic core - and CF(0) - the membrane proton channel. CF(1) has five subunits: alpha(3), beta(3), gamma(1), delta(1), epsilon(1). CF(0) has three main subunits: a(1), b(2) and c(9-12). The alpha and beta chains form an alternating ring which encloses part of the gamma chain. CF(1) is attached to CF(0) by a central stalk formed by the gamma and epsilon chains, while a peripheral stalk is formed by the delta and b chains.

It is found in the cell membrane. The enzyme catalyses ATP + H2O + 4 H(+)(in) = ADP + phosphate + 5 H(+)(out). Produces ATP from ADP in the presence of a proton gradient across the membrane. The alpha chain is a regulatory subunit. The chain is ATP synthase subunit alpha from Halalkalibacterium halodurans (strain ATCC BAA-125 / DSM 18197 / FERM 7344 / JCM 9153 / C-125) (Bacillus halodurans).